The primary structure comprises 160 residues: S-ribosylhomocysteine lyase (160 aa).

His57, His61, and Cys127 together coordinate Fe cation.

The protein belongs to the LuxS family. In terms of assembly, homodimer. It depends on Fe cation as a cofactor.

It carries out the reaction S-(5-deoxy-D-ribos-5-yl)-L-homocysteine = (S)-4,5-dihydroxypentane-2,3-dione + L-homocysteine. In terms of biological role, involved in the synthesis of autoinducer 2 (AI-2) which is secreted by bacteria and is used to communicate both the cell density and the metabolic potential of the environment. The regulation of gene expression in response to changes in cell density is called quorum sensing. Catalyzes the transformation of S-ribosylhomocysteine (RHC) to homocysteine (HC) and 4,5-dihydroxy-2,3-pentadione (DPD). The protein is S-ribosylhomocysteine lyase of Streptococcus uberis (strain ATCC BAA-854 / 0140J).